The chain runs to 1021 residues: tRNA wybutosine-synthesizing protein 4 (1021 aa).

S-adenosyl-L-methionine contacts are provided by residues arginine 68, aspartate 122, 171–172 (DL), and glutamate 198. Residues 826–980 (PTEAPANLAE…STGRDVYGNR (155 aa)) form the JmjC domain.

It belongs to the methyltransferase superfamily. LCMT family.

It catalyses the reaction 7-[(3S)-3-amino-3-carboxypropyl]wyosine(37) in tRNA(Phe) + S-adenosyl-L-methionine = 7-[(3S)-(3-amino-3-methoxycarbonyl)propyl]wyosine(37) in tRNA(Phe) + S-adenosyl-L-homocysteine. The enzyme catalyses 7-[(3S)-(3-amino-3-methoxycarbonyl)propyl]wyosine(37) in tRNA(Phe) + S-adenosyl-L-methionine + CO2 = wybutosine(37) in tRNA(Phe) + S-adenosyl-L-homocysteine + 2 H(+). It participates in tRNA modification; wybutosine-tRNA(Phe) biosynthesis. Functionally, probable S-adenosyl-L-methionine-dependent methyltransferase that acts as a component of the wybutosine biosynthesis pathway. Wybutosine is a hyper modified guanosine with a tricyclic base found at the 3'-position adjacent to the anticodon of eukaryotic phenylalanine tRNA. May methylate the carboxyl group of leucine residues to form alpha-leucine ester residues. The chain is tRNA wybutosine-synthesizing protein 4 (PPM2) from Gibberella zeae (strain ATCC MYA-4620 / CBS 123657 / FGSC 9075 / NRRL 31084 / PH-1) (Wheat head blight fungus).